The primary structure comprises 454 residues: tRNA modification GTPase MnmE (454 aa).

Residues arginine 23, glutamate 80, and lysine 120 each contribute to the (6S)-5-formyl-5,6,7,8-tetrahydrofolate site. A TrmE-type G domain is found at 216-377 (GMKVVIAGRP…LRNHLKQSMG (162 aa)). Residue asparagine 226 coordinates K(+). GTP contacts are provided by residues 226–231 (NAGKSS), 245–251 (TDIAGTT), 270–273 (DTAG), 335–338 (NKAD), and 358–360 (SAR). Mg(2+) is bound at residue serine 230. Positions 245, 247, and 250 each coordinate K(+). Position 251 (threonine 251) interacts with Mg(2+). Position 454 (lysine 454) interacts with (6S)-5-formyl-5,6,7,8-tetrahydrofolate.

This sequence belongs to the TRAFAC class TrmE-Era-EngA-EngB-Septin-like GTPase superfamily. TrmE GTPase family. In terms of assembly, homodimer. Heterotetramer of two MnmE and two MnmG subunits. The cofactor is K(+).

The protein resides in the cytoplasm. Exhibits a very high intrinsic GTPase hydrolysis rate. Involved in the addition of a carboxymethylaminomethyl (cmnm) group at the wobble position (U34) of certain tRNAs, forming tRNA-cmnm(5)s(2)U34. The chain is tRNA modification GTPase MnmE from Klebsiella pneumoniae subsp. pneumoniae (strain ATCC 700721 / MGH 78578).